A 327-amino-acid polypeptide reads, in one-letter code: Flotillin-like protein FloA (327 aa).

2 consecutive transmembrane segments (helical) span residues 8–28 and 29–49; these read VLLITGGILIFLAIFFTLVPI and PLWISSLAAGVRVSIFTLVGM.

The protein belongs to the flotillin-like FloA family. As to quaternary structure, homooligomerizes.

It is found in the cell membrane. It localises to the membrane raft. Found in functional membrane microdomains (FMM) that may be equivalent to eukaryotic membrane rafts. FMMs are highly dynamic and increase in number as cells age. Flotillins are thought to be important factors in membrane fluidity. The protein is Flotillin-like protein FloA of Exiguobacterium sibiricum (strain DSM 17290 / CCUG 55495 / CIP 109462 / JCM 13490 / 255-15).